A 167-amino-acid chain; its full sequence is Ribosome maturation factor RimM (167 aa).

The 72-residue stretch at 94–165 (ENEFYYSDII…KIIITPMEGL (72 aa)) folds into the PRC barrel domain.

The protein belongs to the RimM family. In terms of assembly, binds ribosomal protein uS19.

The protein localises to the cytoplasm. An accessory protein needed during the final step in the assembly of 30S ribosomal subunit, possibly for assembly of the head region. Essential for efficient processing of 16S rRNA. May be needed both before and after RbfA during the maturation of 16S rRNA. It has affinity for free ribosomal 30S subunits but not for 70S ribosomes. The protein is Ribosome maturation factor RimM of Staphylococcus aureus (strain MRSA252).